We begin with the raw amino-acid sequence, 231 residues long: NADH-ubiquinone oxidoreductase chain 4 (231 aa).

7 helical membrane-spanning segments follow: residues 1–21 (PIAG…YGII), 34–54 (LFLP…LTCL), 63–85 (IAYS…TPWG), 89–111 (AMAL…NTTY), 128–148 (ILPM…AIPP), 156–176 (LLIM…LGLS), and 211–231 (LLIA…ELVI).

This sequence belongs to the complex I subunit 4 family.

It localises to the mitochondrion membrane. The catalysed reaction is a ubiquinone + NADH + 5 H(+)(in) = a ubiquinol + NAD(+) + 4 H(+)(out). Core subunit of the mitochondrial membrane respiratory chain NADH dehydrogenase (Complex I) that is believed to belong to the minimal assembly required for catalysis. Complex I functions in the transfer of electrons from NADH to the respiratory chain. The immediate electron acceptor for the enzyme is believed to be ubiquinone. The chain is NADH-ubiquinone oxidoreductase chain 4 (MT-ND4) from Crotalus adamanteus (Eastern diamondback rattlesnake).